The chain runs to 405 residues: Argininosuccinate synthase (405 aa).

ATP-binding positions include 11–19 (AYSGGLDTS) and alanine 38. L-citrulline is bound by residues tyrosine 91 and serine 96. Residue glycine 121 participates in ATP binding. Threonine 123, asparagine 127, and aspartate 128 together coordinate L-aspartate. Asparagine 127 lines the L-citrulline pocket. L-citrulline contacts are provided by arginine 131, serine 181, serine 190, glutamate 266, and tyrosine 278.

Belongs to the argininosuccinate synthase family. Type 1 subfamily. In terms of assembly, homotetramer.

The protein resides in the cytoplasm. It carries out the reaction L-citrulline + L-aspartate + ATP = 2-(N(omega)-L-arginino)succinate + AMP + diphosphate + H(+). Its pathway is amino-acid biosynthesis; L-arginine biosynthesis; L-arginine from L-ornithine and carbamoyl phosphate: step 2/3. The chain is Argininosuccinate synthase from Nitratiruptor sp. (strain SB155-2).